The chain runs to 146 residues: Large ribosomal subunit protein uL15 (146 aa).

Residues 1–64 (MELNSIKPAA…MPMHRRLPKR (64 aa)) form a disordered region. Over residues 30–39 (TATKGHKGQK) the composition is skewed to basic residues.

This sequence belongs to the universal ribosomal protein uL15 family. In terms of assembly, part of the 50S ribosomal subunit.

Functionally, binds to the 23S rRNA. In Geotalea daltonii (strain DSM 22248 / JCM 15807 / FRC-32) (Geobacter daltonii), this protein is Large ribosomal subunit protein uL15.